The primary structure comprises 217 residues: 3,4-dihydroxy-2-butanone 4-phosphate synthase (217 aa).

Residues 37-38 (RE), D42, 150-154 (RRGHT), and E174 contribute to the D-ribulose 5-phosphate site. Mg(2+) is bound at residue E38. Residue H153 coordinates Mg(2+).

Belongs to the DHBP synthase family. As to quaternary structure, homodimer. Mg(2+) serves as cofactor. Requires Mn(2+) as cofactor.

The enzyme catalyses D-ribulose 5-phosphate = (2S)-2-hydroxy-3-oxobutyl phosphate + formate + H(+). It functions in the pathway cofactor biosynthesis; riboflavin biosynthesis; 2-hydroxy-3-oxobutyl phosphate from D-ribulose 5-phosphate: step 1/1. Its function is as follows. Catalyzes the conversion of D-ribulose 5-phosphate to formate and 3,4-dihydroxy-2-butanone 4-phosphate. The chain is 3,4-dihydroxy-2-butanone 4-phosphate synthase from Pseudoalteromonas translucida (strain TAC 125).